The following is a 434-amino-acid chain: 4-hydroxy-3-methylbut-2-en-1-yl diphosphate synthase (flavodoxin) (434 aa).

A compositionally biased stretch (polar residues) spans 1–15 (MQSEAQSPRSSQICS). A disordered region spans residues 1 to 20 (MQSEAQSPRSSQICSTEPVF). [4Fe-4S] cluster is bound by residues cysteine 322, cysteine 325, cysteine 368, and glutamate 375.

Belongs to the IspG family. It depends on [4Fe-4S] cluster as a cofactor.

It carries out the reaction (2E)-4-hydroxy-3-methylbut-2-enyl diphosphate + oxidized [flavodoxin] + H2O + 2 H(+) = 2-C-methyl-D-erythritol 2,4-cyclic diphosphate + reduced [flavodoxin]. It functions in the pathway isoprenoid biosynthesis; isopentenyl diphosphate biosynthesis via DXP pathway; isopentenyl diphosphate from 1-deoxy-D-xylulose 5-phosphate: step 5/6. Its function is as follows. Converts 2C-methyl-D-erythritol 2,4-cyclodiphosphate (ME-2,4cPP) into 1-hydroxy-2-methyl-2-(E)-butenyl 4-diphosphate. The polypeptide is 4-hydroxy-3-methylbut-2-en-1-yl diphosphate synthase (flavodoxin) (Burkholderia mallei (strain ATCC 23344)).